A 1716-amino-acid polypeptide reads, in one-letter code: DNA-directed RNA polymerase I subunit RPA1 (1716 aa).

Residues C64, C67, C74, H77, C104, and C107 each coordinate Zn(2+). Positions 110–201 (LTCPRAAIHL…VAHFWKTHMA (92 aa)) are clamp. Residues C205 and C208 each coordinate Zn(2+). Residues 327–433 (FTNGQTVNLQ…IRQILEKKEG (107 aa)) form a clamp region. A rudder region spans residues 410–423 (DSDMDKLMLEKYPG). Residues K431, R436, and R443 each contribute to the DNA site. The segment at 475–549 (YPQPVTPWNV…QGAKVVCRHV (75 aa)) is involved in RRN3 binding to Pol I complex. R559 lines the RNA pocket. Residues D595, D597, and D599 each contribute to the Mg(2+) site. Position 599 (D599) interacts with RNA. The tract at residues 812-890 (KPNADVMRQR…NEINKACMPF (79 aa)) is funnel. The tract at residues 967–1008 (RPPEFFFHCMAGREGLVDTAVKTSRSGYLQRCIIKHLEGLVI) is bridging helix. The tract at residues 1067 to 1162 (ADPQKVLRHF…SLSVWRPDIH (96 aa)) is mediates the interaction with TOP2A. Positions 1214–1255 (PGEAVGLLAAQSIGEPSTQMTLNTFHFAGRGEMNVTLGIPRL) are trigger loop. R1256 contributes to the DNA binding site. Positions 1368–1493 (ASAFRSVNTR…RHSRPQGAEA (126 aa)) are disordered. Over residues 1380 to 1397 (TQKDLDDTEDSGRNRREE) the composition is skewed to basic and acidic residues. Composition is skewed to acidic residues over residues 1398 to 1419 (ERDE…DADA) and 1429 to 1451 (EEEV…VQEE). The span at 1452–1464 (ENIKGEGAHQTHE) shows a compositional bias: basic and acidic residues. Acidic residues predominate over residues 1465 to 1477 (PDEEEGSGLEEES).

It belongs to the RNA polymerase beta' chain family. In terms of assembly, component of the RNA polymerase I (Pol I) complex consisting of 13 subunits: a ten-subunit catalytic core composed of POLR1A/RPA1, POLR1B/RPA2, POLR1C/RPAC1, POLR1D/RPAC2, POLR1H/RPA12, POLR2E/RPABC1, POLR2F/RPABC2, POLR2H/RPABC3, POLR2K/RPABC4 and POLR2L/RPABC5; a mobile stalk subunit POLR1F/RPA43 protruding from the core and additional subunits homologous to general transcription factors POLR1E/RPA49 and POLR1G/RPA34. Part of Pol I pre-initiation complex (PIC), in which Pol I core assembles with RRN3 and promoter-bound UTBF and SL1/TIF-IB complex. Interacts (via dock II domain) with TOP2A; this interaction may assist Pol I transcription initiation by releasing supercoils occurring during DNA unwinding. Interacts with CAVIN1; this interaction induces the dissociation of Pol I complex paused at rDNA terminator sequences. Interacts with MYO1C. Interacts with ERBB2. Interacts with DDX11. Interacts with RECQL5. Mg(2+) serves as cofactor. In terms of processing, phosphorylated.

It localises to the nucleus. The protein localises to the nucleolus. It is found in the chromosome. The enzyme catalyses RNA(n) + a ribonucleoside 5'-triphosphate = RNA(n+1) + diphosphate. Catalytic core component of RNA polymerase I (Pol I), a DNA-dependent RNA polymerase which synthesizes ribosomal RNA precursors using the four ribonucleoside triphosphates as substrates. Transcribes 47S pre-rRNAs from multicopy rRNA gene clusters, giving rise to 5.8S, 18S and 28S ribosomal RNAs. Pol I-mediated transcription cycle proceeds through transcription initiation, transcription elongation and transcription termination stages. During transcription initiation, Pol I pre-initiation complex (PIC) is recruited by the selectivity factor 1 (SL1/TIF-IB) complex bound to the core promoter that precedes an rDNA repeat unit. The PIC assembly bends the promoter favoring the formation of the transcription bubble and promoter escape. Once the polymerase has escaped from the promoter it enters the elongation phase during which RNA is actively polymerized, based on complementarity with the template DNA strand. Highly processive, assembles in structures referred to as 'Miller trees' where many elongating Pol I complexes queue and transcribe the same rDNA coding regions. At terminator sequences downstream of the rDNA gene, PTRF interacts with Pol I and halts Pol I transcription leading to the release of the RNA transcript and polymerase from the DNA. Forms Pol I active center together with the second largest subunit POLR1B/RPA2. Appends one nucleotide at a time to the 3' end of the nascent RNA, with POLR1A/RPA1 contributing a Mg(2+)-coordinating DxDGD motif, and POLR1B/RPA2 participating in the coordination of a second Mg(2+) ion and providing lysine residues believed to facilitate Watson-Crick base pairing between the incoming nucleotide and the template base. Typically, Mg(2+) ions direct a 5' nucleoside triphosphate to form a phosphodiester bond with the 3' hydroxyl of the preceding nucleotide of the nascent RNA, with the elimination of pyrophosphate. Has proofreading activity: Pauses and backtracks to allow the cleavage of a missincorporated nucleotide via POLR1H/RPA12. High Pol I processivity is associated with decreased transcription fidelity. The sequence is that of DNA-directed RNA polymerase I subunit RPA1 from Rattus norvegicus (Rat).